Here is a 98-residue protein sequence, read N- to C-terminus: MMPISLSLTMAFSLALAGTLIYRSHLMSTLLCLEGMMLSLFILMAMLISHFHMFSMSMAPLILLVFSACEAGIGLALLVKISANYGNDYVQNLNLLKC.

3 helical membrane-spanning segments follow: residues 1–21 (MMPI…GTLI), 28–48 (STLL…AMLI), and 59–79 (APLI…ALLV).

This sequence belongs to the complex I subunit 4L family. In terms of assembly, core subunit of respiratory chain NADH dehydrogenase (Complex I) which is composed of 45 different subunits.

The protein localises to the mitochondrion inner membrane. The catalysed reaction is a ubiquinone + NADH + 5 H(+)(in) = a ubiquinol + NAD(+) + 4 H(+)(out). Core subunit of the mitochondrial membrane respiratory chain NADH dehydrogenase (Complex I) which catalyzes electron transfer from NADH through the respiratory chain, using ubiquinone as an electron acceptor. Part of the enzyme membrane arm which is embedded in the lipid bilayer and involved in proton translocation. The sequence is that of NADH-ubiquinone oxidoreductase chain 4L (MT-ND4L) from Petaurus breviceps (Australian sugar glider).